The chain runs to 59 residues: Large ribosomal subunit protein uL30 (59 aa).

Belongs to the universal ribosomal protein uL30 family. Part of the 50S ribosomal subunit.

The polypeptide is Large ribosomal subunit protein uL30 (Staphylococcus haemolyticus (strain JCSC1435)).